Consider the following 324-residue polypeptide: MATH domain and coiled-coil domain-containing protein At3g44790 (324 aa).

Residues 3-125 (YEKFTWVIKN…NNEVKIVVEV (123 aa)) enclose the MATH domain. Residues 241–309 (FKVDWLERKL…ALLEKEKAKS (69 aa)) are a coiled coil.

The sequence is that of MATH domain and coiled-coil domain-containing protein At3g44790 from Arabidopsis thaliana (Mouse-ear cress).